The primary structure comprises 276 residues: Small ribosomal subunit protein uS2 (276 aa).

It belongs to the universal ribosomal protein uS2 family.

The chain is Small ribosomal subunit protein uS2 from Chlamydia abortus (strain DSM 27085 / S26/3) (Chlamydophila abortus).